An 81-amino-acid chain; its full sequence is Three-finger toxin MALT0057C (81 aa).

The signal sequence occupies residues 1-21 (MKTLLLTLVVVTIVCLDFGHT). 4 disulfides stabilise this stretch: cysteine 24/cysteine 43, cysteine 38/cysteine 60, cysteine 62/cysteine 73, and cysteine 74/cysteine 79.

Belongs to the three-finger toxin family. Short-chain subfamily. Type I alpha-neurotoxin sub-subfamily. As to expression, expressed by the venom gland.

The protein resides in the secreted. Binds to muscle nicotinic acetylcholine receptor (nAChR) and inhibit acetylcholine from binding to the receptor, thereby impairing neuromuscular transmission. This is Three-finger toxin MALT0057C from Micrurus altirostris (Uruguayan coral snake).